The sequence spans 1088 residues: Exportin-T (1088 aa).

Low complexity predominate over residues 435–503; sequence KNNNNKNKNT…VKNANNIKNN (69 aa). 2 disordered regions span residues 435–513 and 1059–1088; these read KNNN…DDDD and LNNN…KNGH.

The protein belongs to the exportin family.

Its subcellular location is the nucleus. The protein resides in the cytoplasm. Mediates the nuclear export of aminoacylated tRNAs. This Dictyostelium discoideum (Social amoeba) protein is Exportin-T (xpot).